Here is a 1149-residue protein sequence, read N- to C-terminus: Guanine nucleotide exchange factor DBS (1149 aa).

The CRAL-TRIO domain occupies 52-224 (AATASDEIMH…DLGGTLDYCH (173 aa)). The stretch at 351–456 (LQLRHFEQGF…VTRRRGLLSK (106 aa)) is one Spectrin repeat. Residues Ser457, Ser462, Ser471, and Ser480 each carry the phosphoserine modification. The stretch at 503-529 (LETGAENKIQELNEIYKEYECILNQDL) forms a coiled coil. The tract at residues 555-627 (KKLAAKQTRP…RTSSTGEEEE (73 aa)) is disordered. Over residues 583 to 594 (PGSWRSSENSSS) the composition is skewed to low complexity. The segment covering 607–616 (AKSEMSEPRQ) has biased composition (basic and acidic residues). Ser621 bears the Phosphoserine mark. Thr622 is subject to Phosphothreonine. The region spanning 632–812 (LRRHVMNELL…LGILKAVNDS (181 aa)) is the DH domain. The region spanning 841–950 (TDHKKGHTKV…IRKVLTSQLQ (110 aa)) is the PH domain. A disordered region spans residues 956 to 1033 (SQHRALEQSH…EAPEEDGGWS (78 aa)). Over residues 966-978 (SLPLPTPSSTSPT) the composition is skewed to low complexity. 4 positions are modified to phosphoserine: Ser1033, Ser1034, Ser1041, and Ser1042. An SH3 domain is found at 1055 to 1116 (LVPGKYTVVM…PASSLSTLLG (62 aa)).

The protein belongs to the MCF2 family. Interacts with GTP-bound RAC1. Interacts with CDC42. Interacts with RHOA. Interacts with CCPG1, which results in specific inhibition of its exchange activity toward RHOA, but does not affect its activity on CDC42. Expressed at low levels in several hemopoietic cell lines and in thymus and spleen, and at higher levels in other tissues, particularly in brain.

It is found in the cytoplasm. It localises to the cell membrane. Its function is as follows. Guanine nucleotide exchange factor that catalyzes guanine nucleotide exchange on RHOA and CDC42, and thereby contributes to the regulation of RHOA and CDC42 signaling pathways. Seems to lack activity with RAC1. Becomes activated and highly tumorigenic by truncation of the N-terminus. This Mus musculus (Mouse) protein is Guanine nucleotide exchange factor DBS (Mcf2l).